The following is a 240-amino-acid chain: MDYFYGTSPPPEYERYASIVDAATLVQGFLWALNYGEASYRSIKDRTYGMAIFPLCCNYAWELVYTVIYSSQNKYERIIMTTWLILNSIMMGFTIKFAPNEWRHAPLVQRNIPFIFLAGVAAFVIAQLALAATVGPGLAMNWVAALCYLLLTIGSLCQLMTRGSSRGVSYTMWLSRFVGTYVGVICVYFRYNYWPQNFSWVDEPIMKCFSGISLAVEIVYGVTLWHIRKQERHHIVEKSK.

6 helical membrane passes run 16–36 (YASI…LNYG), 48–68 (YGMA…YTVI), 78–98 (IIMT…IKFA), 112–132 (IPFI…ALAA), 134–154 (VGPG…LTIG), and 167–187 (GVSY…VICV). Residue asparagine 197 is glycosylated (N-linked (GlcNAc...) asparagine). Residues 205 to 225 (IMKCFSGISLAVEIVYGVTLW) form a helical membrane-spanning segment.

The protein belongs to the paxB family.

The protein localises to the membrane. The enzyme catalyses verruculide C epoxide = 3-hydroxypentacecilide A. The protein operates within secondary metabolite biosynthesis; terpenoid biosynthesis. Functionally, terpene cyclase; part of the gene cluster that mediates the biosynthesis of chrodrimanin B, a meroterpenoid that acts as a potent blocker of insect GABA-gated chloride channels. The first step of the pathway is the biosynthesis of 6-hydroxymellein by the polyketide synthase cdmE. The prenyltransferase cdmH acts as a 6-hydroxymellein 5-farnesyltransferase and produces the hydrophobic metabolite verruculide C. The FAD-dependent monooxygenase cdmI further converts verruculide C into verruculide B. The terpene cyclase cdmG then produced the pentacyclic molecule 3-hydroxypentacecilide A, the backbone structure of chrodrimanin B, via folding the farnesyl moiety of the substrate into the chair-boat conformation. The short-chain dehydrogenase/reductase cdmF functions as the 3-OH dehydrogenase that oxidizes the C-3 hydroxyl group of 3-hydroxypentacecilide A and produces chrodrimanin C, the dehydrogenated product of 3-hydroxypentacecilide A. The cytochrome P450 monooxygenase cdmJ then accepts both 3-hydroxypentacecilide A and chrodrimanin C and functions as a C-7-beta-hydroxylase to produce respectively chrodrimanin H and chrodrimanin F. The dioxygenase cdmA accepts chrodrimanin H to afford chrodrimanin E, which is further transformed to chrodrimanin A by the dioxygenase cdmD. CdmA can also accept chrodrimanin C as substrate to convert it into verruculide A, which is further converted into chrodrimanin T by cdmD. The last step of the biosynthesis is proposed to be performed by the acetyltransferase cdmC which acetylates chrodrimanin A to yield chrodrimanin B. The pathway may also lead to the production of additional shunt products, including chrodrimanins T and U. This Talaromyces verruculosus (Penicillium verruculosum) protein is Terpene cyclase cdmG.